A 419-amino-acid chain; its full sequence is Glutamyl-tRNA reductase (419 aa).

Substrate is bound by residues 49–52 (TCNR), S107, 112–114 (EPQ), and Q118. The active-site Nucleophile is the C50. NADP(+) is bound at residue 187–192 (GAGETI).

This sequence belongs to the glutamyl-tRNA reductase family. In terms of assembly, homodimer.

It catalyses the reaction (S)-4-amino-5-oxopentanoate + tRNA(Glu) + NADP(+) = L-glutamyl-tRNA(Glu) + NADPH + H(+). Its pathway is porphyrin-containing compound metabolism; protoporphyrin-IX biosynthesis; 5-aminolevulinate from L-glutamyl-tRNA(Glu): step 1/2. Catalyzes the NADPH-dependent reduction of glutamyl-tRNA(Glu) to glutamate 1-semialdehyde (GSA). The sequence is that of Glutamyl-tRNA reductase from Vibrio atlanticus (strain LGP32) (Vibrio splendidus (strain Mel32)).